Reading from the N-terminus, the 239-residue chain is MICOS complex subunit mic25a (239 aa).

Residue Gly-2 is the site of N-myristoyl glycine attachment. 2 disordered regions span residues Val-27 to Tyr-88 and Asp-113 to Lys-133. Over residues Asn-50–Pro-78 the composition is skewed to polar residues. Basic and acidic residues predominate over residues Asp-79–Tyr-88. A coiled-coil region spans residues Asp-79–Glu-166. Residues Glu-192–Leu-234 enclose the CHCH domain. 2 consecutive short sequence motifs (cx9C motif) follow at residues Cys-195–Cys-205 and Cys-216–Cys-226. Intrachain disulfides connect Cys-195–Cys-226 and Cys-205–Cys-216.

This sequence belongs to the MICOS complex subunit Mic19 family. Metazoan Mic25 subfamily. In terms of assembly, component of the mitochondrial contact site and cristae organizing system (MICOS) complex (also known as MINOS or MitOS complex).

Its subcellular location is the mitochondrion inner membrane. Functionally, component of the MICOS complex, a large protein complex of the mitochondrial inner membrane that plays crucial roles in the maintenance of crista junctions, inner membrane architecture, and formation of contact sites to the outer membrane. This Danio rerio (Zebrafish) protein is MICOS complex subunit mic25a (chchd6a).